Reading from the N-terminus, the 911-residue chain is Protein translocase subunit SecA (911 aa).

Residues Gln-87, 105–109 (GEGKT), and Asp-512 each bind ATP. The segment at 861–880 (APGLGSEQLSEEGAEVAVAS) is disordered. 4 residues coordinate Zn(2+): Cys-895, Cys-897, Cys-906, and His-907.

It belongs to the SecA family. In terms of assembly, monomer and homodimer. Part of the essential Sec protein translocation apparatus which comprises SecA, SecYEG and auxiliary proteins SecDF-YajC and YidC. Zn(2+) serves as cofactor.

It is found in the cell inner membrane. Its subcellular location is the cytoplasm. The catalysed reaction is ATP + H2O + cellular proteinSide 1 = ADP + phosphate + cellular proteinSide 2.. Its function is as follows. Part of the Sec protein translocase complex. Interacts with the SecYEG preprotein conducting channel. Has a central role in coupling the hydrolysis of ATP to the transfer of proteins into and across the cell membrane, serving both as a receptor for the preprotein-SecB complex and as an ATP-driven molecular motor driving the stepwise translocation of polypeptide chains across the membrane. This Pseudomonas putida (strain ATCC 47054 / DSM 6125 / CFBP 8728 / NCIMB 11950 / KT2440) protein is Protein translocase subunit SecA.